A 356-amino-acid polypeptide reads, in one-letter code: 1,2-phenylacetyl-CoA epoxidase, subunit E (356 aa).

The FAD-binding FR-type domain maps to 2 to 106; it reads TTFHSLTVAK…MVPQGHFGYQ (105 aa). An oxidoreductase region spans residues 112–228; the sequence is QGRYLAIAAG…AAMMDDAETA (117 aa). The 2Fe-2S ferredoxin-type domain occupies 262 to 354; sequence QKVTVRQDGR…DVVVDFDAKG (93 aa). Positions 299, 304, 307, and 337 each coordinate [2Fe-2S] cluster.

The protein in the N-terminal section; belongs to the FAD-binding oxidoreductase type 6 family. The cofactor is [2Fe-2S] cluster. FAD serves as cofactor.

Its pathway is aromatic compound metabolism; phenylacetate degradation. Functionally, component of 1,2-phenylacetyl-CoA epoxidase multicomponent enzyme system which catalyzes the reduction of phenylacetyl-CoA (PA-CoA) to form 1,2-epoxyphenylacetyl-CoA. The subunit E is a reductase with a preference for NADPH and FAD, capable of reducing cytochrome c. This Escherichia coli (strain K12) protein is 1,2-phenylacetyl-CoA epoxidase, subunit E (paaE).